The following is a 280-amino-acid chain: Shikimate dehydrogenase (NADP(+)) (280 aa).

Shikimate contacts are provided by residues 20–22 and Thr-67; that span reads SLS. Lys-71 acts as the Proton acceptor in catalysis. Residues Asn-92 and Asp-107 each coordinate shikimate. NADP(+) is bound by residues 131–135 and Gly-220; that span reads GAGGA. Position 222 (Tyr-222) interacts with shikimate. Gly-243 lines the NADP(+) pocket.

It belongs to the shikimate dehydrogenase family. As to quaternary structure, homodimer.

It catalyses the reaction shikimate + NADP(+) = 3-dehydroshikimate + NADPH + H(+). It functions in the pathway metabolic intermediate biosynthesis; chorismate biosynthesis; chorismate from D-erythrose 4-phosphate and phosphoenolpyruvate: step 4/7. Its function is as follows. Involved in the biosynthesis of the chorismate, which leads to the biosynthesis of aromatic amino acids. Catalyzes the reversible NADPH linked reduction of 3-dehydroshikimate (DHSA) to yield shikimate (SA). The protein is Shikimate dehydrogenase (NADP(+)) of Maricaulis maris (strain MCS10) (Caulobacter maris).